A 125-amino-acid chain; its full sequence is Apolipoprotein C-IV (125 aa).

Residues 1-27 (MSLLRQRLQALPVLCLCVLVLACIGAC) form the signal peptide.

This sequence belongs to the apolipoprotein C4 family.

It localises to the secreted. Functionally, may participate in lipoprotein metabolism. The polypeptide is Apolipoprotein C-IV (APOC4) (Plecturocebus moloch (Dusky titi monkey)).